The chain runs to 480 residues: Endothelial transcription factor GATA-2 (480 aa).

Ser-73 carries the phosphoserine modification. Arg-86 carries the post-translational modification Asymmetric dimethylarginine. Positions 166 to 208 are disordered; the sequence is SGSHLFGFPPTPPKEVSPDPSTTGAASPASSSAGGSVARGEDK. Residues 183–201 are compositionally biased toward low complexity; sequence PDPSTTGAASPASSSAGGS. A Phosphoserine modification is found at Ser-192. 2 consecutive GATA-type zinc fingers follow at residues 295-319 and 349-373; these read CVNCGATATPLWRRDGTGHYLCNAC and CANCQTTTTTLWRRNANGDPVCNAC. A Glycyl lysine isopeptide (Lys-Gly) (interchain with G-Cter in SUMO2) cross-link involves residue Lys-389. Residues 457–480 form a disordered region; sequence TPIHPSSSLSFGHPHPSSMVTAMG.

Interacts with BRD3. Interacts with AR and CCAR1. Interacts with MDFIC.

It is found in the nucleus. In terms of biological role, transcriptional activator which regulates endothelin-1 gene expression in endothelial cells. Binds to the consensus sequence 5'-AGATAG-3'. In Mus musculus (Mouse), this protein is Endothelial transcription factor GATA-2 (Gata2).